The sequence spans 232 residues: 2-C-methyl-D-erythritol 4-phosphate cytidylyltransferase (232 aa).

Belongs to the IspD/TarI cytidylyltransferase family. IspD subfamily.

The enzyme catalyses 2-C-methyl-D-erythritol 4-phosphate + CTP + H(+) = 4-CDP-2-C-methyl-D-erythritol + diphosphate. It participates in isoprenoid biosynthesis; isopentenyl diphosphate biosynthesis via DXP pathway; isopentenyl diphosphate from 1-deoxy-D-xylulose 5-phosphate: step 2/6. Catalyzes the formation of 4-diphosphocytidyl-2-C-methyl-D-erythritol from CTP and 2-C-methyl-D-erythritol 4-phosphate (MEP). In Deinococcus radiodurans (strain ATCC 13939 / DSM 20539 / JCM 16871 / CCUG 27074 / LMG 4051 / NBRC 15346 / NCIMB 9279 / VKM B-1422 / R1), this protein is 2-C-methyl-D-erythritol 4-phosphate cytidylyltransferase.